The chain runs to 365 residues: Alanine racemase (365 aa).

Lysine 35 serves as the catalytic Proton acceptor; specific for D-alanine. Position 35 is an N6-(pyridoxal phosphate)lysine (lysine 35). Arginine 130 contributes to the substrate binding site. Catalysis depends on tyrosine 256, which acts as the Proton acceptor; specific for L-alanine. Methionine 304 serves as a coordination point for substrate.

Belongs to the alanine racemase family. The cofactor is pyridoxal 5'-phosphate.

It carries out the reaction L-alanine = D-alanine. The protein operates within amino-acid biosynthesis; D-alanine biosynthesis; D-alanine from L-alanine: step 1/1. Its function is as follows. Catalyzes the interconversion of L-alanine and D-alanine. May also act on other amino acids. The sequence is that of Alanine racemase (alr) from Acidovorax sp. (strain JS42).